The following is a 76-amino-acid chain: Acyl carrier protein (76 aa).

A Carrier domain is found at 1-75 (MVLEKIKTLM…DVVLYIEKNL (75 aa)). Serine 35 is modified (O-(pantetheine 4'-phosphoryl)serine).

The protein belongs to the acyl carrier protein (ACP) family. 4'-phosphopantetheine is transferred from CoA to a specific serine of apo-ACP by AcpS. This modification is essential for activity because fatty acids are bound in thioester linkage to the sulfhydryl of the prosthetic group.

The protein resides in the cytoplasm. The protein operates within lipid metabolism; fatty acid biosynthesis. Functionally, carrier of the growing fatty acid chain in fatty acid biosynthesis. The chain is Acyl carrier protein from Phytoplasma australiense.